Here is a 180-residue protein sequence, read N- to C-terminus: Bifunctional protein PyrR (180 aa).

Residues 101-113 (VVLVDDVIFKGRT) carry the PRPP-binding motif.

The protein belongs to the purine/pyrimidine phosphoribosyltransferase family. PyrR subfamily.

The catalysed reaction is UMP + diphosphate = 5-phospho-alpha-D-ribose 1-diphosphate + uracil. Regulates the transcription of the pyrimidine nucleotide (pyr) operon in response to exogenous pyrimidines. In terms of biological role, also displays a weak uracil phosphoribosyltransferase activity which is not physiologically significant. The polypeptide is Bifunctional protein PyrR (Trichormus variabilis (strain ATCC 29413 / PCC 7937) (Anabaena variabilis)).